The following is a 474-amino-acid chain: Probable protein phosphatase 2C 37 (474 aa).

Positions 1–90 are disordered; that stretch reads MVMASAGVNM…RDDDGCSSTA (90 aa). Residues 57 to 77 are compositionally biased toward low complexity; that stretch reads LPASSASPSPSPTSSAASSDC. One can recognise a PPM-type phosphatase domain in the interval 113–470; sequence AFGSVSLAGR…DNISVVVIDL (358 aa). Mn(2+)-binding residues include D152, G153, and D387. The disordered stretch occupies residues 406–434; sequence LEDGSPTSGRRAARSGEAASSSAGAPAAA. The segment covering 420–434 has biased composition (low complexity); it reads SGEAASSSAGAPAAA. Position 461 (D461) interacts with Mn(2+).

The protein belongs to the PP2C family. The cofactor is Mg(2+). It depends on Mn(2+) as a cofactor.

The catalysed reaction is O-phospho-L-seryl-[protein] + H2O = L-seryl-[protein] + phosphate. The enzyme catalyses O-phospho-L-threonyl-[protein] + H2O = L-threonyl-[protein] + phosphate. The chain is Probable protein phosphatase 2C 37 from Oryza sativa subsp. japonica (Rice).